Here is a 572-residue protein sequence, read N- to C-terminus: Laccase-3 (572 aa).

An N-terminal signal peptide occupies residues 1–18; the sequence is MARTTFLVSVSLFVSAVL. Plastocyanin-like domains follow at residues 21–145 and 157–304; these read TVEY…LVIY and IDDE…LIYE. His82, His84, His127, and His129 together coordinate Cu cation. Cysteines 103 and 561 form a disulfide. 5 N-linked (GlcNAc...) asparagine glycosylation sites follow: Asn182, Asn228, Asn294, Asn367, and Asn405. The region spanning 422 to 540 is the Plastocyanin-like 3 domain; it reads DMPTLLKILT…EGFAMVFAEA (119 aa). The Cu cation site is built by His470, His473, His475, His522, Cys523, His524, and His528.

This sequence belongs to the multicopper oxidase family. In terms of assembly, homodimer. Cu cation serves as cofactor. In terms of tissue distribution, in mycelia, at a lower level than LCC4.

Its subcellular location is the secreted. The catalysed reaction is 4 hydroquinone + O2 = 4 benzosemiquinone + 2 H2O. Lignin degradation and detoxification of lignin-derived products. The polypeptide is Laccase-3 (LCC3) (Thanatephorus cucumeris (Black scurf of potato)).